The primary structure comprises 260 residues: Ribosomal RNA small subunit methyltransferase J (260 aa).

S-adenosyl-L-methionine is bound by residues glutamate 125 to arginine 126 and aspartate 179.

The protein belongs to the methyltransferase superfamily. RsmJ family.

It localises to the cytoplasm. It catalyses the reaction guanosine(1516) in 16S rRNA + S-adenosyl-L-methionine = N(2)-methylguanosine(1516) in 16S rRNA + S-adenosyl-L-homocysteine + H(+). Its function is as follows. Specifically methylates the guanosine in position 1516 of 16S rRNA. This chain is Ribosomal RNA small subunit methyltransferase J, found in Pseudomonas fluorescens (strain ATCC BAA-477 / NRRL B-23932 / Pf-5).